A 149-amino-acid polypeptide reads, in one-letter code: Protein SprT-like (149 aa).

Residues 5-143 (DYVKQVSLED…CGLCRGKLLL (139 aa)) enclose the SprT-like domain. His64 lines the Zn(2+) pocket. The active site involves Glu65. Position 68 (His68) interacts with Zn(2+).

This sequence belongs to the SprT family. The cofactor is Zn(2+).

The protein resides in the cytoplasm. The protein is Protein SprT-like of Streptococcus pneumoniae (strain Hungary19A-6).